A 345-amino-acid chain; its full sequence is Methylthioribose-1-phosphate isomerase (345 aa).

Substrate is bound by residues 44–46 (RGA), arginine 87, and glutamine 194. Aspartate 235 acts as the Proton donor in catalysis. Residue 245–246 (NK) coordinates substrate.

The protein belongs to the eIF-2B alpha/beta/delta subunits family. MtnA subfamily.

It carries out the reaction 5-(methylsulfanyl)-alpha-D-ribose 1-phosphate = 5-(methylsulfanyl)-D-ribulose 1-phosphate. It functions in the pathway amino-acid biosynthesis; L-methionine biosynthesis via salvage pathway; L-methionine from S-methyl-5-thio-alpha-D-ribose 1-phosphate: step 1/6. Its function is as follows. Catalyzes the interconversion of methylthioribose-1-phosphate (MTR-1-P) into methylthioribulose-1-phosphate (MTRu-1-P). The sequence is that of Methylthioribose-1-phosphate isomerase from Heliobacterium modesticaldum (strain ATCC 51547 / Ice1).